Consider the following 113-residue polypeptide: Large ribosomal subunit protein P1 (113 aa).

A compositionally biased stretch (low complexity) spans 56 to 66 (TAAAAPAPAAG). Residues 56–113 (TAAAAPAPAAGGSAGGEVEAADDDDEEDAEEEAADEGGDDDGDDDEEADGEGLGALFG) form a disordered region. Residues 74–105 (EAADDDDEEDAEEEAADEGGDDDGDDDEEADG) are compositionally biased toward acidic residues.

The protein belongs to the eukaryotic ribosomal protein P1/P2 family. In terms of assembly, part of the 50S ribosomal subunit. Homodimer, it forms part of the ribosomal stalk which helps the ribosome interact with GTP-bound translation factors. Forms a heptameric uL10/P0(P1)2(P1)2(P1)2 complex, where uL10/P0 forms an elongated spine to which the P1 dimers bind in a sequential fashion.

Forms part of the ribosomal stalk, playing a central role in the interaction of the ribosome with GTP-bound translation factors. This chain is Large ribosomal subunit protein P1, found in Haloferax volcanii (strain ATCC 29605 / DSM 3757 / JCM 8879 / NBRC 14742 / NCIMB 2012 / VKM B-1768 / DS2) (Halobacterium volcanii).